The following is a 318-amino-acid chain: Pantothenate kinase (318 aa).

96-103 (GSVAVGKS) serves as a coordination point for ATP.

Belongs to the prokaryotic pantothenate kinase family.

The protein resides in the cytoplasm. It catalyses the reaction (R)-pantothenate + ATP = (R)-4'-phosphopantothenate + ADP + H(+). It participates in cofactor biosynthesis; coenzyme A biosynthesis; CoA from (R)-pantothenate: step 1/5. The polypeptide is Pantothenate kinase (Coxiella burnetii (strain RSA 493 / Nine Mile phase I)).